Reading from the N-terminus, the 279-residue chain is NH(3)-dependent NAD(+) synthetase (279 aa).

Residue 40 to 47 (GLSGGIDS) coordinates ATP. Asp46 is a Mg(2+) binding site. Deamido-NAD(+) is bound at residue Arg122. Thr142 is a binding site for ATP. Glu147 serves as a coordination point for Mg(2+). 2 residues coordinate deamido-NAD(+): Lys155 and Asp162. Positions 171 and 193 each coordinate ATP. Residue 253 to 254 (HK) coordinates deamido-NAD(+).

The protein belongs to the NAD synthetase family. In terms of assembly, homodimer.

It catalyses the reaction deamido-NAD(+) + NH4(+) + ATP = AMP + diphosphate + NAD(+) + H(+). Its pathway is cofactor biosynthesis; NAD(+) biosynthesis; NAD(+) from deamido-NAD(+) (ammonia route): step 1/1. Functionally, catalyzes the ATP-dependent amidation of deamido-NAD to form NAD. Uses ammonia as a nitrogen source. The sequence is that of NH(3)-dependent NAD(+) synthetase from Sulfurisphaera tokodaii (strain DSM 16993 / JCM 10545 / NBRC 100140 / 7) (Sulfolobus tokodaii).